The following is a 360-amino-acid chain: Phenylalanine--tRNA ligase alpha subunit (360 aa).

Glu-260 contacts Mg(2+).

It belongs to the class-II aminoacyl-tRNA synthetase family. Phe-tRNA synthetase alpha subunit type 1 subfamily. Tetramer of two alpha and two beta subunits. It depends on Mg(2+) as a cofactor.

The protein resides in the cytoplasm. It catalyses the reaction tRNA(Phe) + L-phenylalanine + ATP = L-phenylalanyl-tRNA(Phe) + AMP + diphosphate + H(+). The chain is Phenylalanine--tRNA ligase alpha subunit from Rhodopseudomonas palustris (strain BisB5).